The sequence spans 411 residues: MAKKKDEEYCSFCGMPRTQVNLMLEGVHAHICDECALRAGEVVREALQKFKSEETNNLKREDLPRPIEIKEFLDSYVIGQDDAKRFLSVAVYNHYKRLLQQEDSDGVEIEKSNIIMVGPTGTGKTLLARTIAKMLHVPFAVVDATVLTEAGYVGEDIESILTRLLQAADYDVKQAERGIVFIDEIDKIARKSDNPSITRDVSGEGVQQGLLKLLEGSIVNVPPQGGRKHPEQKMIPVDTRHILFVCAGAFDGIEKKIAQRLNTRVVGYTAGLQNRHIDRENMLRYIRPQDLKSFGLIPEIIGRLPILTHLEPLDRDALRNIMTEPKNAITKQYEKLFAMDGIKVSFTSDMLDFVVDKAIEFKLGARGLRSIVETIMMDAMFTMPSGKKKTLVVDKAYAEAHLNIDDLLQDQ.

A ClpX-type ZB domain is found at 1 to 51 (MAKKKDEEYCSFCGMPRTQVNLMLEGVHAHICDECALRAGEVVREALQKFK). Positions 10, 13, 32, and 35 each coordinate Zn(2+). 119–126 (PTGTGKTL) contacts ATP.

It belongs to the ClpX chaperone family. As to quaternary structure, component of the ClpX-ClpP complex. Forms a hexameric ring that, in the presence of ATP, binds to fourteen ClpP subunits assembled into a disk-like structure with a central cavity, resembling the structure of eukaryotic proteasomes.

ATP-dependent specificity component of the Clp protease. It directs the protease to specific substrates. Can perform chaperone functions in the absence of ClpP. In Porphyromonas gingivalis (strain ATCC 33277 / DSM 20709 / CIP 103683 / JCM 12257 / NCTC 11834 / 2561), this protein is ATP-dependent Clp protease ATP-binding subunit ClpX.